Reading from the N-terminus, the 1228-residue chain is Clustered mitochondria protein homolog (1228 aa).

The 260-residue stretch at P298–A557 folds into the Clu domain. One copy of the TPR 1 repeat lies at C486–E519. Positions L671–E702 form a coiled coil. 2 TPR repeats span residues A982–V1015 and A1108–E1141.

This sequence belongs to the CLU family. As to quaternary structure, may associate with the eukaryotic translation initiation factor 3 (eIF-3) complex.

Its subcellular location is the cytoplasm. Its function is as follows. mRNA-binding protein involved in proper cytoplasmic distribution of mitochondria. This chain is Clustered mitochondria protein homolog, found in Eremothecium gossypii (strain ATCC 10895 / CBS 109.51 / FGSC 9923 / NRRL Y-1056) (Yeast).